A 41-amino-acid polypeptide reads, in one-letter code: Photosystem I reaction center subunit IX (41 aa).

Residues 7–27 (YLSTAPVVALIWFTFTAGLLI) traverse the membrane as a helical segment.

It belongs to the PsaJ family.

It is found in the plastid. The protein resides in the chloroplast thylakoid membrane. Functionally, may help in the organization of the PsaE and PsaF subunits. This Pleurastrum terricola (Filamentous green alga) protein is Photosystem I reaction center subunit IX.